Reading from the N-terminus, the 782-residue chain is General transcription and DNA repair factor IIH helicase/translocase subunit XPB (782 aa).

The span at 1 to 11 shows a compositional bias: basic and acidic residues; sequence MGKRDRVDRDK. The tract at residues 1–52 is disordered; the sequence is MGKRDRVDRDKKKSKKRQYEEEEEDEDDAPGNESQEAVPSAAGKQVDESSTK. Positions 6–18 match the Nuclear localization signal motif; it reads RVDRDKKKSKKRQ. Over residues 20–30 the composition is skewed to acidic residues; the sequence is EEEEEDEDDAP. Position 34 is a phosphoserine (serine 34). In terms of domain architecture, Helicase ATP-binding spans 328 to 489; that stretch reads FGNGRARSGV…LNFLIGPKLY (162 aa). Position 341 to 348 (341 to 348) interacts with ATP; it reads PCGAGKSL. Positions 442–445 match the DEVH box motif; that stretch reads EVHT. The region spanning 543–703 is the Helicase C-terminal domain; it reads ACQFLIKFHE…AGMEEEELAF (161 aa). A Phosphoserine modification is found at serine 686. Serine 751 is subject to Phosphoserine; by CK2.

It belongs to the helicase family. RAD25/XPB subfamily. Component of the 7-subunit TFIIH core complex composed of XPB/ERCC3, XPD/ERCC2, GTF2H1, GTF2H2, GTF2H3, GTF2H4 and GTF2H5, which is active in NER. The core complex associates with the 3-subunit CDK-activating kinase (CAK) module composed of CCNH/cyclin H, CDK7 and MNAT1 to form the 10-subunit holoenzyme (holo-TFIIH) active in transcription. Interacts with PUF60. Interacts with ATF7IP. Interacts with KAT2A; leading to KAT2A recruitment to promoters and acetylation of histones. Part of TBP-based Pol II pre-initiation complex (PIC), in which Pol II core assembles with general transcription factors and other specific initiation factors including GTF2E1, GTF2E2, GTF2F1, GTF2F2, TCEA1, ERCC2, ERCC3, GTF2H2, GTF2H3, GTF2H4, GTF2H5, GTF2A1, GTF2A2, GTF2B and TBP; this large multi-subunit PIC complex mediates DNA unwinding and targets Pol II core to the transcription start site where the first phosphodiester bond forms. In terms of processing, phosphorylation on Ser-751 by CK2 controls the 5'-excision activity of ERCC1-XPF endonuclease; phosphorylated protein inhibits the excision activity and thus NER. Dephosphorylation reactivates the 5'-excision step. Phosphorylation has no effect on transcription or the 3'-5' helicase activity.

The protein resides in the nucleus. The enzyme catalyses Couples ATP hydrolysis with the unwinding of duplex DNA by translocating in the 3'-5' direction.. It carries out the reaction ATP + H2O = ADP + phosphate + H(+). Its activity is regulated as follows. Phosphorylation on Ser-751 by CK2 controls the 5'-excision activity of ERCC1-XPF endonuclease; phosphorylated protein inhibits the excision activity and thus NER. ATPase activity is stimulated by TFIIH subunit p52 (GTF2H4). DNA translocase activity by this subunit in TFIIH is stimulated by XPA, ERCC5/XPG and XFP plus ERCC1. ATP-dependent 3'-5' DNA helicase/translocase; binds dsDNA rather than ssDNA, unzipping it in a translocase rather than classical helicase activity. Component of the general transcription and DNA repair factor IIH (TFIIH) core complex. When complexed to CDK-activating kinase (CAK), involved in RNA transcription by RNA polymerase II. The ATPase activity of XPB/ERCC3, but not its helicase activity, is required for DNA opening; it may wrap around the damaged DNA wedging it open, causing localized melting and twisting that allows XPD/ERCC2 helicase to anchor. The ATP-dependent helicase activity of XPB/ERCC3 may be required for promoter escape. Also involved in transcription-coupled nucleotide excision repair (NER) of damaged DNA. In NER, TFIIH acts by opening DNA around the lesion to allow the excision of the damaged oligonucleotide and its replacement by a new DNA fragment. The structure of the TFIIH transcription complex differs from the NER-TFIIH complex; large movements by XPD/ERCC2 and XPB/ERCC3 are stabilized by XPA. The sequence is that of General transcription and DNA repair factor IIH helicase/translocase subunit XPB (Ercc3) from Rattus norvegicus (Rat).